The following is a 177-amino-acid chain: Nucleoside triphosphate/diphosphate phosphatase (177 aa).

The Proton donor role is filled by Arg-23. 6 residues coordinate Mg(2+): Asn-87, Asp-103, Asp-105, Asp-107, Asp-120, and Glu-123.

The protein belongs to the Ntdp family. Mg(2+) serves as cofactor.

It carries out the reaction a ribonucleoside 5'-triphosphate + H2O = a ribonucleoside 5'-diphosphate + phosphate + H(+). The enzyme catalyses a ribonucleoside 5'-diphosphate + H2O = a ribonucleoside 5'-phosphate + phosphate + H(+). Its function is as follows. Has nucleoside phosphatase activity towards nucleoside triphosphates and nucleoside diphosphates. The polypeptide is Nucleoside triphosphate/diphosphate phosphatase (Streptococcus uberis (strain ATCC BAA-854 / 0140J)).